Consider the following 432-residue polypeptide: Casein kinase II subunit alpha-4, chloroplastic (432 aa).

Residues 1–55 (MALRPCTGFTISSLRNASAANNNLFSLLSFSSSSPAKRNLLLSSLQDNLRRFASS) constitute a chloroplast transit peptide. Positions 63 to 83 (LRNQQQQHQQQQQSRVKEKSE) are disordered. The span at 66-75 (QQQQHQQQQQ) shows a compositional bias: low complexity. In terms of domain architecture, Protein kinase spans 132–417 (YEVVRKVGRG…AKEAMAHPYF (286 aa)). Residues 138-146 (VGRGKYSEV) and Lys-161 contribute to the ATP site. Asp-249 functions as the Proton acceptor in the catalytic mechanism.

It belongs to the protein kinase superfamily. Ser/Thr protein kinase family. CK2 subfamily. Tetramer of two alpha and two beta chains. In terms of tissue distribution, expressed in root tips, lateral root primordia, cotyledons, leaf primordia, sepals, filaments, stigma, and anthers.

It is found in the plastid. It localises to the chloroplast. The enzyme catalyses L-seryl-[protein] + ATP = O-phospho-L-seryl-[protein] + ADP + H(+). The catalysed reaction is L-threonyl-[protein] + ATP = O-phospho-L-threonyl-[protein] + ADP + H(+). Functionally, casein kinases are operationally defined by their preferential utilization of acidic proteins such as caseins as substrates. The alpha chain contains the catalytic site. Involved in the regulation of various developmental processes. Involved in the regulation of plant growth and flowering time. Involved in retrograde signaling in plant responses to abscisic acid (ABA) and heat stress. May act as an enhancing factor in abiotic stress signaling through modulation of the expression of some molecular players in retrograde signaling. Phosphorylates RuBisCo activase (RCA) at Thr-78. The chain is Casein kinase II subunit alpha-4, chloroplastic from Arabidopsis thaliana (Mouse-ear cress).